The chain runs to 302 residues: Taste receptor type 2 member 104 (302 aa).

At 1 to 7 (MLSALES) the chain is on the extracellular side. Residues 8-28 (ILLSVATSEAMLGVLGNTFIV) traverse the membrane as a helical segment. Over 29 to 43 (LVNYTDWVRNKKLSK) the chain is Cytoplasmic. Residues 44–64 (INFILTGLAISRIFTIWIITL) form a helical membrane-spanning segment. At 65–87 (DAYTKVFLLTMLMPSSLHECMSY) the chain is on the extracellular side. Residues 88–108 (IWVIINHLSVWFSTSLGIFYF) traverse the membrane as a helical segment. Topologically, residues 109–128 (LKIANFSHYIFLWMKRRADK) are cytoplasmic. A helical transmembrane segment spans residues 129 to 149 (VFVFLIVFLIITWLASFPLAV). At 150–182 (KVIKDVKIYQSNTSWLIHLEKSELLINYVFANM) the chain is on the extracellular side. Asparagine 161 carries N-linked (GlcNAc...) asparagine glycosylation. A helical membrane pass occupies residues 183–203 (GPISLFIVAIIACFLLTISLW). The Cytoplasmic segment spans residues 204–229 (RHSRQMQSIGSGFRDLNTEAHMKAMK). A helical membrane pass occupies residues 230–250 (VLIAFIILFILYFLGILIETL). Residues 251-259 (CLFLTNNKL) are Extracellular-facing. The helical transmembrane segment at 260 to 280 (LFIFGFTLSAMYPCCHSFILI) threads the bilayer. Over 281–302 (LTSRELKQATMRALQRLKCCET) the chain is Cytoplasmic.

This sequence belongs to the G-protein coupled receptor T2R family.

Its subcellular location is the membrane. In terms of biological role, putative taste receptor which may play a role in the perception of bitterness. The chain is Taste receptor type 2 member 104 from Mus musculus (Mouse).